Consider the following 147-residue polypeptide: Pathogenesis-related protein PR-4A (147 aa).

The N-terminal stretch at 1–25 is a signal peptide; sequence MERVNNYKLCVALLIISMVMAMAAA. The region spanning 26–147 is the Barwin domain; it reads QSATNVRSTY…VNYEFVNCND (122 aa). 3 cysteine pairs are disulfide-bonded: cysteine 54/cysteine 86, cysteine 75/cysteine 109, and cysteine 89/cysteine 145.

The protein localises to the secreted. It localises to the cell wall. This Nicotiana tabacum (Common tobacco) protein is Pathogenesis-related protein PR-4A.